We begin with the raw amino-acid sequence, 287 residues long: Protein REVEILLE 3 (287 aa).

Residues Thr56–Gln110 enclose the HTH myb-type domain. A DNA-binding region (H-T-H motif) is located at residues Trp83–Phe106. The interval Lys111–Ala135 is disordered.

The protein localises to the nucleus. In terms of biological role, probable transcription factor. The protein is Protein REVEILLE 3 (RVE3) of Arabidopsis thaliana (Mouse-ear cress).